Reading from the N-terminus, the 483-residue chain is Glutamyl-tRNA(Gln) amidotransferase subunit A (483 aa).

Catalysis depends on charge relay system residues lysine 76 and serine 151. Serine 175 functions as the Acyl-ester intermediate in the catalytic mechanism.

This sequence belongs to the amidase family. GatA subfamily. As to quaternary structure, heterotrimer of A, B and C subunits.

It carries out the reaction L-glutamyl-tRNA(Gln) + L-glutamine + ATP + H2O = L-glutaminyl-tRNA(Gln) + L-glutamate + ADP + phosphate + H(+). Allows the formation of correctly charged Gln-tRNA(Gln) through the transamidation of misacylated Glu-tRNA(Gln) in organisms which lack glutaminyl-tRNA synthetase. The reaction takes place in the presence of glutamine and ATP through an activated gamma-phospho-Glu-tRNA(Gln). This is Glutamyl-tRNA(Gln) amidotransferase subunit A from Pseudomonas fluorescens (strain Pf0-1).